The sequence spans 356 residues: Arginine kinase (356 aa).

Residue Ala2 is modified to N-acetylalanine. The region spanning 9–91 (KLEEGFKKLE…FDPIIEDYHK (83 aa)) is the Phosphagen kinase N-terminal domain. 64-68 (GVGIY) serves as a coordination point for L-arginine. The Phosphagen kinase C-terminal domain maps to 119-356 (FVISTRVRCG…LELIKIEKEM (238 aa)). ATP is bound by residues 122 to 126 (STRVR) and His185. Glu225 lines the L-arginine pocket. Arg229 is a binding site for ATP. Cys271 serves as a coordination point for L-arginine. ATP-binding positions include 280 to 284 (RASVH) and 309 to 314 (RGTRGE). An L-arginine-binding site is contributed by Glu314.

It belongs to the ATP:guanido phosphotransferase family.

It catalyses the reaction L-arginine + ATP = N(omega)-phospho-L-arginine + ADP + H(+). This Homarus gammarus (European lobster) protein is Arginine kinase.